A 361-amino-acid polypeptide reads, in one-letter code: G2/mitotic-specific cyclin-B1 (361 aa).

Residues 1–13 (MLRATNNRRTSNN) are compositionally biased toward polar residues. The tract at residues 1 to 33 (MLRATNNRRTSNNVEKDSLQMAKHGNGPLKPVN) is disordered.

It belongs to the cyclin family. Cyclin AB subfamily. As to quaternary structure, interacts with the CDK1 protein kinase to form a serine/threonine kinase holoenzyme complex also known as maturation promoting factor (MPF). The cyclin subunit imparts substrate specificity to the complex. Interacts with E3 ubiquitin-protein ligase etc-1. In terms of processing, ubiquitinated by etc-1 likely during meiosis, resulting in its degradation.

Its subcellular location is the cytoplasm. In terms of biological role, essential for the control of the cell cycle at the G2/M (mitosis) transition. This Caenorhabditis elegans protein is G2/mitotic-specific cyclin-B1 (cyb-1).